The primary structure comprises 455 residues: Kynurenine 3-monooxygenase (455 aa).

This sequence belongs to the aromatic-ring hydroxylase family. KMO subfamily. FAD serves as cofactor.

The enzyme catalyses L-kynurenine + NADPH + O2 + H(+) = 3-hydroxy-L-kynurenine + NADP(+) + H2O. Its pathway is cofactor biosynthesis; NAD(+) biosynthesis; quinolinate from L-kynurenine: step 1/3. Catalyzes the hydroxylation of L-kynurenine (L-Kyn) to form 3-hydroxy-L-kynurenine (L-3OHKyn). Required for synthesis of quinolinic acid. The sequence is that of Kynurenine 3-monooxygenase from Xanthomonas oryzae pv. oryzae (strain KACC10331 / KXO85).